The following is a 354-amino-acid chain: Protein CbrA (354 aa).

The protein belongs to the CbrA family.

The polypeptide is Protein CbrA (cbrA) (Escherichia coli (strain K12)).